A 47-amino-acid chain; its full sequence is MKKITGIILLLLAAIILAACQANYIRDVQGGTVSPSSTAELTGVETQ.

Positions 1 to 19 (MKKITGIILLLLAAIILAA) are cleaved as a signal peptide. Residue cysteine 20 is the site of N-palmitoyl cysteine attachment. The S-diacylglycerol cysteine moiety is linked to residue cysteine 20.

It is found in the cell outer membrane. Functionally, lysis proteins are required for both colicin release and partial cell lysis. This chain is Lysis protein for colicin E7 (lys), found in Escherichia coli.